Reading from the N-terminus, the 218-residue chain is Large ribosomal subunit protein uL3 (218 aa).

The protein belongs to the universal ribosomal protein uL3 family. In terms of assembly, part of the 50S ribosomal subunit. Forms a cluster with proteins L14 and L19.

In terms of biological role, one of the primary rRNA binding proteins, it binds directly near the 3'-end of the 23S rRNA, where it nucleates assembly of the 50S subunit. The sequence is that of Large ribosomal subunit protein uL3 from Rhodococcus jostii (strain RHA1).